The sequence spans 490 residues: Cysteine--tRNA ligase (490 aa).

Cys-43 is a binding site for Zn(2+). The 'HIGH' region motif lies at 45-55 (MTVQSSPHLGH). The segment at 177 to 204 (VDEMSPAEDSDPRGKRDPRDFALWKGHK) is disordered. The span at 186–204 (SDPRGKRDPRDFALWKGHK) shows a compositional bias: basic and acidic residues. The Zn(2+) site is built by Cys-228, His-253, and Glu-257. The 'KMSKS' region signature appears at 284-288 (KMSKS). Lys-287 contacts ATP.

The protein belongs to the class-I aminoacyl-tRNA synthetase family. In terms of assembly, monomer. It depends on Zn(2+) as a cofactor.

It is found in the cytoplasm. It carries out the reaction tRNA(Cys) + L-cysteine + ATP = L-cysteinyl-tRNA(Cys) + AMP + diphosphate. This chain is Cysteine--tRNA ligase, found in Cutibacterium acnes (strain DSM 16379 / KPA171202) (Propionibacterium acnes).